Reading from the N-terminus, the 504-residue chain is Putative BTB/POZ domain-containing protein R842 (504 aa).

One can recognise a BTB domain in the interval 21 to 91 (SDVKLILKDN…FYGFKSPSVT (71 aa)).

This sequence belongs to the mimivirus BTB/WD family.

The protein is Putative BTB/POZ domain-containing protein R842 of Acanthamoeba polyphaga (Amoeba).